A 195-amino-acid polypeptide reads, in one-letter code: uncharacterized protein (195 aa).

A compositionally biased stretch (polar residues) spans 1–11 (MDYIVSPTSSE). The interval 1–118 (MDYIVSPTSS…LDTEGGFVLS (118 aa)) is disordered. Residues 35–46 (SPEDITDSDEQN) are compositionally biased toward acidic residues. The span at 47 to 63 (DTTTTTSEMSSTSSVPS) shows a compositional bias: low complexity. Over residues 82 to 93 (SDSKLIFDSDNK) the composition is skewed to basic and acidic residues. Residues 94-110 (DQDDEDDEDDEELEGLD) show a composition bias toward acidic residues.

This is an uncharacterized protein from Acanthamoeba polyphaga mimivirus (APMV).